The primary structure comprises 476 residues: Protein transport protein Sec61 subunit alpha isoform 1 (476 aa).

Over 1 to 33 (MAIKFLEVIKPFCVILPEIQKPERKIQFKEKVL) the chain is Cytoplasmic. The chain crosses the membrane as a helical span at residues 34 to 53 (WTAITLFIFLVCCQIPLFGI). Residues 54-76 (MSSDSADPFYWMRVILASNRGTL) lie on the Lumenal side of the membrane. A helical transmembrane segment spans residues 77–96 (MELGISPIVTSGLIMQLLAG). Topologically, residues 97-117 (AKIIEVGDTPKDRALFNGAQK) are cytoplasmic. A helical membrane pass occupies residues 118-138 (LFGMIITIGQSIVYVMTGMYG). Residues 139–144 (DPSEMG) lie on the Lumenal side of the membrane. The helical transmembrane segment at 145-165 (AGICLLITIQLFVAGLIVLLL) threads the bilayer. Topologically, residues 166–172 (DELLQKG) are cytoplasmic. The helical transmembrane segment at 173-193 (YGLGSGISLFIATNICETIVW) threads the bilayer. Residues 194-240 (KAFSPTTVNTGRGMEFEGAIIALFHLLATRTDKVRALREAFYRQNLP) are Lumenal-facing. A helical transmembrane segment spans residues 241–261 (NLMNLIATIFVFAVVIYFQGF). Residues 262-288 (RVDLPIKSARYRGQYNTYPIKLFYTSN) are Cytoplasmic-facing. A helical membrane pass occupies residues 289–309 (IPIILQSALVSNLYVISQMLS). The Lumenal portion of the chain corresponds to 310–354 (ARFSGNLLVSLLGTWSDTSSGGPARAYPVGGLCYYLSPPESFGSV). A helical transmembrane segment spans residues 355–375 (LEDPVHAVVYIVFMLGSCAFF). At 376–420 (SKTWIEVSGSSAKDVAKQLKEQQMVMRGHRETSMVHELNRYIPTA) the chain is on the cytoplasmic side. The helical transmembrane segment at 421 to 441 (AAFGGLCIGALSVLADFLGAI) threads the bilayer. Residues 442-445 (GSGT) are Lumenal-facing. Residues 446–462 (GILLAVTIIYQYFEIFV) traverse the membrane as a helical segment. Residues 463-476 (KEQSEVGSMGALLF) lie on the Cytoplasmic side of the membrane.

It belongs to the SecY/SEC61-alpha family. The SEC61 channel-forming translocon complex consists of channel-forming core components SEC61A1, SEC61B and SEC61G and different auxiliary components such as SEC62 and SEC63. The SEC61 channel associates with the multi-pass translocon (MPT) complex. As to expression, expressed in proximal and distal tubules in kidney (at protein level).

The protein resides in the endoplasmic reticulum membrane. In terms of biological role, component of SEC61 channel-forming translocon complex that mediates transport of signal peptide-containing precursor polypeptides across the endoplasmic reticulum (ER). Forms a ribosome receptor and a gated pore in the ER membrane, both functions required for cotranslational translocation of nascent polypeptides. May cooperate with auxiliary protein SEC62, SEC63 and HSPA5/BiP to enable post-translational transport of small presecretory proteins. The SEC61 channel is also involved in ER membrane insertion of transmembrane proteins: it mediates membrane insertion of the first few transmembrane segments of proteins, while insertion of subsequent transmembrane regions of multi-pass membrane proteins is mediated by the multi-pass translocon (MPT) complex. The SEC61 channel cooperates with the translocating protein TRAM1 to import nascent proteins into the ER. Controls the passive efflux of calcium ions from the ER lumen to the cytosol through SEC61 channel, contributing to the maintenance of cellular calcium homeostasis. Plays a critical role in nephrogenesis, specifically at pronephros stage. This chain is Protein transport protein Sec61 subunit alpha isoform 1 (SEC61A1), found in Homo sapiens (Human).